A 28-amino-acid polypeptide reads, in one-letter code: Putative GDSL-motif lipase/hydrolase-like protein (28 aa).

The protein belongs to the 'GDSL' lipolytic enzyme family.

This chain is Putative GDSL-motif lipase/hydrolase-like protein, found in Populus euphratica (Euphrates poplar).